The primary structure comprises 111 residues: Probable 4-amino-4-deoxy-L-arabinose-phosphoundecaprenol flippase subunit ArnE (111 aa).

Transmembrane regions (helical) follow at residues 38-58, 61-81, and 89-109; these read LWLGLALICMGAAMVLWLLVL, LPVGIAYPMLSLNFVWVTLAA, and VLPRHWLGVALIISGIIILGS. The EamA domain occupies 40 to 109; the sequence is LGLALICMGA…IISGIIILGS (70 aa).

Belongs to the ArnE family. In terms of assembly, heterodimer of ArnE and ArnF.

The protein resides in the cell inner membrane. Its pathway is bacterial outer membrane biogenesis; lipopolysaccharide biosynthesis. Functionally, translocates 4-amino-4-deoxy-L-arabinose-phosphoundecaprenol (alpha-L-Ara4N-phosphoundecaprenol) from the cytoplasmic to the periplasmic side of the inner membrane. In Salmonella paratyphi A (strain ATCC 9150 / SARB42), this protein is Probable 4-amino-4-deoxy-L-arabinose-phosphoundecaprenol flippase subunit ArnE.